A 784-amino-acid polypeptide reads, in one-letter code: Receptor-like protein 38 (784 aa).

The signal sequence occupies residues 1-30 (MIRSQSYCFLGITITIYFFFCLLPLPNTFA). At 31–752 (SPPTQSLCRH…SELEEPVLNW (722 aa)) the chain is on the extracellular side. LRR repeat units follow at residues 109-133 (LQHL…IENL), 134-157 (SHLT…IGNL), 158-180 (NQLE…SFAN), 182-204 (TKLS…LSNL), and 205-227 (TSLA…DLSG). The N-linked (GlcNAc...) asparagine glycan is linked to asparagine 132. N-linked (GlcNAc...) asparagine glycosylation is found at asparagine 180, asparagine 193, and asparagine 203. Residues 228–251 (LHNLEQIFGNENSFVGLFPASLLK) form an LRR 6; degenerate repeat. LRR repeat units follow at residues 252 to 276 (ISSL…NTSS), 278 to 301 (SRLT…LSKL), 302 to 324 (VNLE…SISK), 326 to 349 (VNLT…IWKP), 351 to 373 (NLQS…EVVN), 374 to 400 (GAKL…NFRF), 402 to 422 (FFLD…LKNS), 423 to 446 (TDFN…CMDS), 447 to 470 (TMLR…LMNC), and 472 to 496 (DMEF…SRKS). Asparagine 273 carries N-linked (GlcNAc...) asparagine glycosylation. Residue asparagine 327 is glycosylated (N-linked (GlcNAc...) asparagine). Residues asparagine 421 and asparagine 432 are each glycosylated (N-linked (GlcNAc...) asparagine). An LRR 17; degenerate repeat occupies 497 to 518 (LMVLVLRSNAFYGPVYNSTTYL). N-linked (GlcNAc...) asparagine glycosylation is found at asparagine 513, asparagine 544, and asparagine 562. The LRR 18 repeat unit spans residues 520–544 (FPRLSIIDISNNDFVGSLPQDYFAN). LRR repeat units follow at residues 608–632 (FRGF…IGLL), 633–656 (SELL…LANI), 657–680 (TNLE…LGNL), and 682–705 (FLSN…QFGT). N-linked (GlcNAc...) asparagine glycosylation is found at asparagine 639, asparagine 655, asparagine 668, asparagine 679, asparagine 687, and asparagine 707. Residues 753-773 (IAAAIAFGPGVFCGFVIGHIF) form a helical membrane-spanning segment. Residues 774–784 (TSYKHLWFIAR) are Cytoplasmic-facing.

Belongs to the RLP family.

The protein resides in the cell membrane. In Arabidopsis thaliana (Mouse-ear cress), this protein is Receptor-like protein 38.